The following is a 92-amino-acid chain: SPbeta prophage-derived uncharacterized protein YopY (92 aa).

The polypeptide is SPbeta prophage-derived uncharacterized protein YopY (yopY) (Bacillus subtilis (strain 168)).